Here is a 360-residue protein sequence, read N- to C-terminus: UDP-3-O-acylglucosamine N-acyltransferase (360 aa).

His256 serves as the catalytic Proton acceptor. The interval 341–360 (EGSGAETAARPDDDRDEGRG) is disordered. The span at 349-360 (ARPDDDRDEGRG) shows a compositional bias: basic and acidic residues.

It belongs to the transferase hexapeptide repeat family. LpxD subfamily. As to quaternary structure, homotrimer.

It catalyses the reaction a UDP-3-O-[(3R)-3-hydroxyacyl]-alpha-D-glucosamine + a (3R)-hydroxyacyl-[ACP] = a UDP-2-N,3-O-bis[(3R)-3-hydroxyacyl]-alpha-D-glucosamine + holo-[ACP] + H(+). It functions in the pathway bacterial outer membrane biogenesis; LPS lipid A biosynthesis. Its function is as follows. Catalyzes the N-acylation of UDP-3-O-acylglucosamine using 3-hydroxyacyl-ACP as the acyl donor. Is involved in the biosynthesis of lipid A, a phosphorylated glycolipid that anchors the lipopolysaccharide to the outer membrane of the cell. This is UDP-3-O-acylglucosamine N-acyltransferase from Rhodopseudomonas palustris (strain ATCC BAA-98 / CGA009).